Here is a 304-residue protein sequence, read N- to C-terminus: Bifunctional protein FolD (304 aa).

NADP(+) contacts are provided by residues 167–169 (GRS), Ser-192, and Ile-233.

This sequence belongs to the tetrahydrofolate dehydrogenase/cyclohydrolase family. Homodimer.

It carries out the reaction (6R)-5,10-methylene-5,6,7,8-tetrahydrofolate + NADP(+) = (6R)-5,10-methenyltetrahydrofolate + NADPH. The enzyme catalyses (6R)-5,10-methenyltetrahydrofolate + H2O = (6R)-10-formyltetrahydrofolate + H(+). Its pathway is one-carbon metabolism; tetrahydrofolate interconversion. Functionally, catalyzes the oxidation of 5,10-methylenetetrahydrofolate to 5,10-methenyltetrahydrofolate and then the hydrolysis of 5,10-methenyltetrahydrofolate to 10-formyltetrahydrofolate. The polypeptide is Bifunctional protein FolD (Rhodospirillum centenum (strain ATCC 51521 / SW)).